Reading from the N-terminus, the 314-residue chain is Aspartate carbamoyltransferase catalytic subunit (314 aa).

2 residues coordinate carbamoyl phosphate: Arg-55 and Thr-56. Lys-83 lines the L-aspartate pocket. Arg-105, His-139, and Gln-142 together coordinate carbamoyl phosphate. Arg-172 and Arg-226 together coordinate L-aspartate. Gly-267 and Pro-268 together coordinate carbamoyl phosphate.

Belongs to the aspartate/ornithine carbamoyltransferase superfamily. ATCase family. Heterododecamer (2C3:3R2) of six catalytic PyrB chains organized as two trimers (C3), and six regulatory PyrI chains organized as three dimers (R2).

It carries out the reaction carbamoyl phosphate + L-aspartate = N-carbamoyl-L-aspartate + phosphate + H(+). The protein operates within pyrimidine metabolism; UMP biosynthesis via de novo pathway; (S)-dihydroorotate from bicarbonate: step 2/3. In terms of biological role, catalyzes the condensation of carbamoyl phosphate and aspartate to form carbamoyl aspartate and inorganic phosphate, the committed step in the de novo pyrimidine nucleotide biosynthesis pathway. This Rhodococcus opacus (strain B4) protein is Aspartate carbamoyltransferase catalytic subunit.